Reading from the N-terminus, the 495-residue chain is Trigger factor (495 aa).

One can recognise a PPIase FKBP-type domain in the interval 169–254 (GDRVAMDYVG…VKDVAAPGAV (86 aa)). Positions 441–495 (LAEDEGEAKAETKKAAPKKKAAAKTEAAEAGEGEEAAAPKKKAAPKKKAADESAE) are disordered.

This sequence belongs to the FKBP-type PPIase family. Tig subfamily.

Its subcellular location is the cytoplasm. The enzyme catalyses [protein]-peptidylproline (omega=180) = [protein]-peptidylproline (omega=0). In terms of biological role, involved in protein export. Acts as a chaperone by maintaining the newly synthesized protein in an open conformation. Functions as a peptidyl-prolyl cis-trans isomerase. In Rhizobium etli (strain CIAT 652), this protein is Trigger factor.